The chain runs to 104 residues: Large ribosomal subunit protein uL24 (104 aa).

This sequence belongs to the universal ribosomal protein uL24 family. In terms of assembly, part of the 50S ribosomal subunit.

Functionally, one of two assembly initiator proteins, it binds directly to the 5'-end of the 23S rRNA, where it nucleates assembly of the 50S subunit. Its function is as follows. One of the proteins that surrounds the polypeptide exit tunnel on the outside of the subunit. This Erwinia tasmaniensis (strain DSM 17950 / CFBP 7177 / CIP 109463 / NCPPB 4357 / Et1/99) protein is Large ribosomal subunit protein uL24.